Consider the following 146-residue polypeptide: Ribonuclease P protein component (146 aa).

This sequence belongs to the RnpA family. In terms of assembly, consists of a catalytic RNA component (M1 or rnpB) and a protein subunit.

It catalyses the reaction Endonucleolytic cleavage of RNA, removing 5'-extranucleotides from tRNA precursor.. RNaseP catalyzes the removal of the 5'-leader sequence from pre-tRNA to produce the mature 5'-terminus. It can also cleave other RNA substrates such as 4.5S RNA. The protein component plays an auxiliary but essential role in vivo by binding to the 5'-leader sequence and broadening the substrate specificity of the ribozyme. The chain is Ribonuclease P protein component from Chlorobium phaeobacteroides (strain DSM 266 / SMG 266 / 2430).